The following is a 400-amino-acid chain: Enoyl-[acyl-carrier-protein] reductase [NADH] 1 (400 aa).

Residues 48-53 (GASSGY), 74-75 (FE), 111-112 (DA), and 139-140 (LA) each bind NAD(+). Tyr225 provides a ligand contact to substrate. Tyr235 acts as the Proton donor in catalysis. NAD(+)-binding positions include Lys244 and 273–275 (VVT).

The protein belongs to the TER reductase family. As to quaternary structure, monomer.

The enzyme catalyses a 2,3-saturated acyl-[ACP] + NAD(+) = a (2E)-enoyl-[ACP] + NADH + H(+). The protein operates within lipid metabolism; fatty acid biosynthesis. Involved in the final reduction of the elongation cycle of fatty acid synthesis (FAS II). Catalyzes the reduction of a carbon-carbon double bond in an enoyl moiety that is covalently linked to an acyl carrier protein (ACP). The polypeptide is Enoyl-[acyl-carrier-protein] reductase [NADH] 1 (Vibrio vulnificus (strain YJ016)).